The sequence spans 92 residues: Protein LSO2 (92 aa).

Composition is skewed to basic and acidic residues over residues 1–10 (MGKRFSESAA) and 38–72 (EASK…ERDA). Residues 1–92 (MGKRFSESAA…KGGKGKRKMK (92 aa)) form a disordered region. The stretch at 17 to 80 (ARKRDQAHAK…DALLTAEEEQ (64 aa)) forms a coiled coil.

The protein belongs to the CCDC124 family. Associates with translationally inactive ribosomes in the nonrotated state. LSO2 bridges the decoding sites of the small with the GTPase activating center (GAC) of the large subunit. This position allows accommodation of the DOM34-dependent ribosome recycling system, which splits LSO2-containing ribosomes.

The protein localises to the nucleus. Its subcellular location is the cytoplasm. Its function is as follows. Ribosome-binding protein involved in ribosome hibernation by associating with translationally inactive ribosomes. Required for translational recovery after starvation from stationary phase. May facilitate rapid translation reactivation by stabilizing the recycling-competent state of inactive ribosomes. The polypeptide is Protein LSO2 (Saccharomyces cerevisiae (strain ATCC 204508 / S288c) (Baker's yeast)).